A 76-amino-acid polypeptide reads, in one-letter code: U1-cyrtautoxin-As1d (76 aa).

Disulfide bonds link Cys23–Cys37, Cys30–Cys51, Cys36–Cys66, and Cys69–Cys76.

It belongs to the neurotoxin 21 family. Expressed by the venom gland.

The protein resides in the secreted. Neurotoxin with probable ion channel impairing activity. In vivo, is both paralytic and lethal, when injected into lepidopteran larvae. The sequence is that of U1-cyrtautoxin-As1d from Apomastus schlingeri (Trap-door spider).